We begin with the raw amino-acid sequence, 509 residues long: Carboxysome shell carbonic anhydrase (509 aa).

C170 is a Zn(2+) binding site. Residue D172 is the Proton acceptor of the active site. Positions 238 and 249 each coordinate Zn(2+).

It belongs to the beta-class carbonic anhydrase family. CsoSCA subfamily. Homodimer. Zn(2+) serves as cofactor.

The protein resides in the carboxysome. It carries out the reaction hydrogencarbonate + H(+) = CO2 + H2O. Functionally, reversible hydration of carbon dioxide. Essential for photosynthetic carbon dioxide fixation, supplies CO(2) to RuBisCO (ribulose bisphosphate carboxylase, cbbL-cbbS) in the carboxysome. There are estimated to be 29 CsoSCA oligomers per carboxysome. This chain is Carboxysome shell carbonic anhydrase, found in Prochlorococcus marinus subsp. pastoris (strain CCMP1986 / NIES-2087 / MED4).